The chain runs to 264 residues: MANYHLMVPNPSRNAQIPSEAQRPMYGESHPSLFANMNNKKVVVAAACTLPADSLFAVMLYLIYPDSFLPSTLFIVNFSLVLLALLGINSKVSSMILPALVWKCVLLLFLLFLGCISVDAYQVPATDLEEAHVSQPQEQPHRSMMVWKDLAAKYPMLPFIAVACTIVLAVEARVFFSAWQKICCPAVVNDESNLEKSPPSYNACVRATASEKDLPSYEDALKNSSQQPSTSSSSSSPPSRPPHSVYTIPDVKMHKSSMMTVISL.

A run of 4 helical transmembrane segments spans residues 43–63 (VVAAACTLPADSLFAVMLYLI), 68–88 (FLPSTLFIVNFSLVLLALLGI), 96–116 (ILPALVWKCVLLLFLLFLGCI), and 150–170 (LAAKYPMLPFIAVACTIVLAV). The disordered stretch occupies residues 216-247 (SYEDALKNSSQQPSTSSSSSSPPSRPPHSVYT). A compositionally biased stretch (low complexity) spans 224 to 237 (SSQQPSTSSSSSSP).

The protein resides in the membrane. This is an uncharacterized protein from Caenorhabditis elegans.